A 109-amino-acid chain; its full sequence is Glutaredoxin-8 (109 aa).

The Glutaredoxin domain occupies 5–109 (VTKAEEMIKS…EELTKIGLLP (105 aa)). Cysteines 25 and 28 form a disulfide.

It belongs to the glutaredoxin family. As to quaternary structure, monomer.

It localises to the cytoplasm. Its function is as follows. Glutathione-dependent oxidoreductase with lower activity compared to the other members of the glutaredoxin family. The disulfide bond functions as an electron carrier in the glutathione-dependent synthesis of deoxyribonucleotides by the enzyme ribonucleotide reductase. The sequence is that of Glutaredoxin-8 (GRX8) from Saccharomyces cerevisiae (strain ATCC 204508 / S288c) (Baker's yeast).